The following is a 130-amino-acid chain: Small ribosomal subunit protein uS9 (130 aa).

The disordered stretch occupies residues 107 to 130 (DSRKVERKKPGLKKARKASQFSKR). Over residues 111–130 (VERKKPGLKKARKASQFSKR) the composition is skewed to basic residues.

It belongs to the universal ribosomal protein uS9 family.

This Streptococcus sanguinis (strain SK36) protein is Small ribosomal subunit protein uS9.